A 485-amino-acid polypeptide reads, in one-letter code: Inosine-5'-monophosphate dehydrogenase (485 aa).

CBS domains follow at residues 99–154 (IVED…LVKE) and 156–215 (MTKD…VRDE). NAD(+) contacts are provided by residues Asp247 and 294-296 (GIG). 2 residues coordinate K(+): Gly296 and Gly298. Position 299 (Ser299) interacts with IMP. Cys301 lines the K(+) pocket. Cys301 acts as the Thioimidate intermediate in catalysis. Residues 334–336 (DGG), 357–358 (GN), and 381–385 (YRGMG) each bind IMP. Arg397 serves as the catalytic Proton acceptor. Glu412 serves as a coordination point for IMP. Positions 466, 467, and 468 each coordinate K(+).

The protein belongs to the IMPDH/GMPR family. As to quaternary structure, homotetramer. Requires K(+) as cofactor.

The catalysed reaction is IMP + NAD(+) + H2O = XMP + NADH + H(+). It participates in purine metabolism; XMP biosynthesis via de novo pathway; XMP from IMP: step 1/1. Mycophenolic acid (MPA) is a non-competitive inhibitor that prevents formation of the closed enzyme conformation by binding to the same site as the amobile flap. In contrast, mizoribine monophosphate (MZP) is a competitive inhibitor that induces the closed conformation. MPA is a potent inhibitor of mammalian IMPDHs but a poor inhibitor of the bacterial enzymes. MZP is a more potent inhibitor of bacterial IMPDH. Functionally, catalyzes the conversion of inosine 5'-phosphate (IMP) to xanthosine 5'-phosphate (XMP), the first committed and rate-limiting step in the de novo synthesis of guanine nucleotides, and therefore plays an important role in the regulation of cell growth. In Pyrococcus abyssi (strain GE5 / Orsay), this protein is Inosine-5'-monophosphate dehydrogenase.